The following is a 1695-amino-acid chain: MRRHPPLDPTMAPGPEDNVRNLRKRQARGPGTARGCGPEVGGRRKNRQKRRMVAQASPGKDKVERDRSVAASGAEKATRRRVERPRGQVSPSDRRGIQAAKEAELRLQTERHTKEKRKVTEASSDDPQPEIDLVRKESLTSSESFQTVECLQSLSKEGIVEGIKRRRIRNKKLKSLENPPLKVTENEATQNIKVEFQDELYKNTPKYSCNILSPEVENNSILKLHVCNCFPHSKGCNDENNLPYKPDGGCMHVAENSSKLKKENLRSLAEKSDTNSIPRLLQTKESVMGVNKLLLEESDLCQSKTNDLLSCLQREKNKYSIEESSVGRKSRKRIKSEKAVTESETVTEMNFYEYNKSELMLQENKMIADGKEAETKSPLNVLRKVSHNTVSLMDHLLSLPEMVGKETSPEHHVNAVCQKTIEPLLKEETENASEPLGYESMAQTEDFKSMKSSIGKSPNEYHIEKRSSQEELRRESEELKLSCQRTIPMTGKRTWPYYSCARISAWCWKKASLPESSYFLPGSQESCRQDDVLKHQTNQTHLTDSKLLLQSSLTETNIESSSKEKLDSNSNCLSSVSAIEHTLMVMKEPIIEDDKKIKSEELSKSGSEVVSNTTEDTQLISETQILTGNKKKDRGNLTKLNLIATSKDGQEANNSTGRTIHRKSCVAKQTFVAPDLVKILNTGRLTNFKIPLLKNKTEKRKEINAKSSEREAYSPLELLDNLSGAEVRQNRSKESVSMTTSGPQTLSIQNSVTPAQASSDSFYDKNSCSIYPRFTKQDNNNKPSNHISERGNIVSNKEVASLTVENNTFSYDPGYVEKNSFFSCNEQETFQPVSSEVSVRKITKNFSEIKVGSPDILKAYEDDVLLIDVIQDDPDLFGVSNEGELSCTSGVSRISQEPNVAGEDQSADFKYMETPVKKEPSDNLRELSVLDTGSIKSEACASNSAASEIRHDSKDVNTSLGKVANKASENETLEDFSEQIKGSNLDKKHRFTDKVIIKEEKEKIYEVCKSKDSRNADIMVDECQFAAPVPKPLCLLVPPLNLSGHQEETVLNTWTNDFRFLGKHSVLKLQNPATCEIFKREKNVGVLQKSLGLMLPYKYCRFHFNTLRGCERPLCKFVHVPEQGDEKVCMDVFKKYININELCLLQRAVNIFMEYYRKFPPGIHFDLQVLNDLLNSLLKHCLLKEVFQIVNLSIMVKIQPSLKILLNIFEHVATMKLRNAVPALTDIFCKLIEAGMVLDPEHFNYIVKLLYQVQASKQEITAVLEMRSRLQTRLFKKNWKCDLDSALNKLEHCKEKGDWTRLGKLYLNVKMGCEKLADFETFCACIAKTLTKHYEKEGPDVPFCEFAETVSKDPQNSKVDESVLGRIGISALFFYHKLLQWSKGRKVLDKLYELKIHFTSLKGLIGPEMLASRCQIVNVAAEIFLKSGSLNGAIWVMRESEWIINTPLWPCDRLDVLNRHNLLCTIAHDILAKSLFRQAFEVLQNLPGFQNSQETVEVSQYSILFNKLLDSCIESNSLGTSSSVAEFMISKSVPIDFSFLRRLITSLGRSCLWLKARAHYKSALSLGCYPQLEGNLYRKLLLIPSYLSEIEMLLAMEIFMVSNASSIQSPGTSTQILQIVLKRCENNQSQRNDDYQAAVERLIMAARISDPKLFIKHMTVNINKEQVYSLEHCSVLKWLKENMKWAGKVWLFSNH.

Disordered regions lie at residues 1–128, 441–474, and 725–753; these read MRRH…DDPQ, MAQTEDFKSMKSSIGKSPNEYHIEKRSSQEELRR, and AEVRQNRSKESVSMTTSGPQTLSIQNSVT. Residues 43-52 show a composition bias toward basic residues; sequence RRKNRQKRRM. Basic and acidic residues-rich tracts occupy residues 59-68, 92-113, and 459-474; these read GKDKVERDRS, SDRRGIQAAKEAELRLQTERHT, and NEYHIEKRSSQEELRR. Positions 735–753 are enriched in polar residues; that stretch reads SVSMTTSGPQTLSIQNSVT.

It localises to the cytoplasm. The protein localises to the cytosol. Functionally, important for normal spermatogenesis and male fertility. Specifically required for progression to the post-meiotic stages of spermatocyte development. Seems to be necessary for normal expression levels of a number of testis-expressed gene transcripts, although its role in this process is unclear. In Callithrix jacchus (White-tufted-ear marmoset), this protein is Protein TOPAZ1 (TOPAZ1).